We begin with the raw amino-acid sequence, 169 residues long: MADSKKPAIKKPVPKGDRKANRRGAARLAAVQALYQMDIGGAGINETFAEFESHWIGNEVEGDQYLPAEAAFFRDVVSGVVRDQKKLDPLIDDALAKGWPLARIDAILRAVMRAGAYELEHRKDIPARVVVSEYVDVAHAFVEKDETGMVNAVLDQIARQFREDEFTRG.

The tract at residues 1 to 23 (MADSKKPAIKKPVPKGDRKANRR) is disordered.

It belongs to the NusB family.

Functionally, involved in transcription antitermination. Required for transcription of ribosomal RNA (rRNA) genes. Binds specifically to the boxA antiterminator sequence of the ribosomal RNA (rrn) operons. The protein is Transcription antitermination protein NusB of Rhodopseudomonas palustris (strain HaA2).